Consider the following 335-residue polypeptide: Autophagy-related protein 21 (335 aa).

WD repeat units follow at residues 165-205 (CHSS…LVTE) and 210-249 (YIPASIVSISFHPVEPFLACASENGTIHVFKISKQPSDPN).

It belongs to the WD repeat PROPPIN family.

The protein resides in the cytoplasm. It is found in the golgi apparatus. Its subcellular location is the golgi stack membrane. It localises to the vacuole membrane. The protein localises to the preautophagosomal structure membrane. In terms of biological role, required for cytoplasm to vacuole transport (Cvt) vesicles formation and autophagy. Has a role in sporulation. In Schizosaccharomyces pombe (strain 972 / ATCC 24843) (Fission yeast), this protein is Autophagy-related protein 21 (mug179).